Reading from the N-terminus, the 284-residue chain is MKQIEWKSYFNHTLGFLKYFGQRFNSDNTNITAGHLTYVSMLSLVPLLVVMFTVFSAFPMFDELKENLEQALFANLLPTSGEQLEEYLNEFVTNASKMTAIGVGFLFIVAIMLMSAIDKALNSIWRDSSSRHWLVSFAVYWMLLTLGPVLIGSGLAATSYLMSLSQFADEYVSGIQSFVLWFVPIVTSFVFFVLMYQLVPNRQVKFRYAAFGAVIAALLFELSKQLFSLYITFFPTYQAIYGALATIPILIVWIYLSWLIVLIGAVLTVSLEEYQLQQPEPKSD.

The next 6 helical transmembrane spans lie at 41 to 61 (MLSLVPLLVVMFTVFSAFPMF), 98 to 118 (MTAIGVGFLFIVAIMLMSAID), 137 to 157 (FAVYWMLLTLGPVLIGSGLAA), 178 to 198 (FVLWFVPIVTSFVFFVLMYQL), 214 to 234 (VIAALLFELSKQLFSLYITFF), and 247 to 267 (IPILIVWIYLSWLIVLIGAVL).

Belongs to the UPF0761 family.

Its subcellular location is the cell inner membrane. The polypeptide is UPF0761 membrane protein IL2447 (Idiomarina loihiensis (strain ATCC BAA-735 / DSM 15497 / L2-TR)).